The sequence spans 541 residues: Valine N-monooxygenase 2 (541 aa).

At Met-1–Thr-18 the chain is on the cytoplasmic side. A helical transmembrane segment spans residues Ser-19–Ile-41. Topologically, residues Lys-42 to Pro-541 are lumenal. N-linked (GlcNAc...) asparagine glycosylation is present at Asn-277. Cys-477 serves as a coordination point for heme. Residue Asn-505 is glycosylated (N-linked (GlcNAc...) asparagine).

This sequence belongs to the cytochrome P450 family. It depends on heme as a cofactor. As to expression, expressed in the epidermis, the next two cortex cell layers, the endodermis and the pericycle of leaf petioles. Strong expression around the laticifers among the phloem cells and in parenchymatic cells between the protoxylem and the metaxylem cells. In the leaves, preferentially expressed in the mesophyll cells adjacent to the epidermis.

Its subcellular location is the microsome membrane. The enzyme catalyses L-valine + 2 reduced [NADPH--hemoprotein reductase] + 2 O2 = (E)-2-methylpropanal oxime + 2 oxidized [NADPH--hemoprotein reductase] + CO2 + 3 H2O + 2 H(+). It carries out the reaction L-valine + reduced [NADPH--hemoprotein reductase] + O2 = N-hydroxy-L-valine + oxidized [NADPH--hemoprotein reductase] + H2O + 2 H(+). The catalysed reaction is N-hydroxy-L-valine + reduced [NADPH--hemoprotein reductase] + O2 = N,N-dihydroxy-L-valine + oxidized [NADPH--hemoprotein reductase] + H2O + H(+). It catalyses the reaction L-isoleucine + 2 reduced [NADPH--hemoprotein reductase] + 2 O2 = (1E,2S)-2-methylbutanal oxime + 2 oxidized [NADPH--hemoprotein reductase] + CO2 + 3 H2O + 2 H(+). The enzyme catalyses L-isoleucine + reduced [NADPH--hemoprotein reductase] + O2 = N-hydroxy-L-isoleucine + oxidized [NADPH--hemoprotein reductase] + H2O + 2 H(+). It carries out the reaction N-hydroxy-L-isoleucine + reduced [NADPH--hemoprotein reductase] + O2 = N,N-dihydroxy-L-isoleucine + oxidized [NADPH--hemoprotein reductase] + H2O + H(+). Involved in the biosynthesis of the cyanogenic glucosides linamarin and lotaustralin. Can use L-valine or L-isoleucine as substrate. Catalyzes multi-step reactions starting with two successive N-hydroxylations using L-valine and L-isoleucine as substrates leading to the formation of N,N-dihydroxy-L-valine and N,N-dihydroxy-L-isoleucine, respectively; following spontaneous reactions lead to the production of (E)-2-methylpropanal oxime and (1E,2S)-2-methylbutanal oxime, respectively. This Manihot esculenta (Cassava) protein is Valine N-monooxygenase 2.